The primary structure comprises 257 residues: Putative B3 domain-containing protein At2g27410 (257 aa).

Residues 5–50 (ARTTKINHFRGTSTTQNPNRGLEPSPSSYVTRRSKEKRPINVEKRS) are disordered. The span at 8-35 (TKINHFRGTSTTQNPNRGLEPSPSSYVT) shows a compositional bias: polar residues. A DNA-binding region (TF-B3) is located at residues 115–209 (TPDFLTEDET…KLCFALTPKN (95 aa)). The tract at residues 212–257 (RGNSLPGGDGASTSGESGQVPLPIPPARYSSNSGQGCSGESSSSSS) is disordered. A compositionally biased stretch (low complexity) spans 241–257 (SSNSGQGCSGESSSSSS).

It localises to the nucleus. In Arabidopsis thaliana (Mouse-ear cress), this protein is Putative B3 domain-containing protein At2g27410.